Here is a 351-residue protein sequence, read N- to C-terminus: MAVSSEQHELSHFKRTQTKKEKFNCSEYGNRSCPENERSLGVRVAMYSFMAGSIFITIFGNLAMIISISYFKQLHTPTNFLILSMAITDFLLGFTIMPYSMIRSVENCWYFGLTFCKIYYSFDLMLSITSIFHLCSVAIDRFYAICYPLLYSTKITIPVIKRLLLLCWSVPGAFAFGVVFSEAYADGIEGYDILVACSSSCPVMFNKLWGTTLFMAGFFTPGSMMVGIYGKIFAVSRKHAHAINNLRENQNNQVKKDKKAAKTLGIVIGVFLLCWFPCFFTILLDPFLNFSTPVVLFDALTWFGYFNSTCNPLIYGFFYPWFRRALKYILLGKIFSSCFHNTILCMQKESE.

The Extracellular segment spans residues 1–48 (MAVSSEQHELSHFKRTQTKKEKFNCSEYGNRSCPENERSLGVRVAMYS). N-linked (GlcNAc...) asparagine glycosylation is found at Asn24 and Asn30. 2 disulfide bridges follow: Cys33-Cys197 and Cys116-Cys201. A helical membrane pass occupies residues 49–69 (FMAGSIFITIFGNLAMIISIS). Topologically, residues 70–79 (YFKQLHTPTN) are cytoplasmic. Residues 80-100 (FLILSMAITDFLLGFTIMPYS) traverse the membrane as a helical segment. Residues 101 to 118 (MIRSVENCWYFGLTFCKI) lie on the Extracellular side of the membrane. Residues 119 to 139 (YYSFDLMLSITSIFHLCSVAI) traverse the membrane as a helical segment. Over 140–162 (DRFYAICYPLLYSTKITIPVIKR) the chain is Cytoplasmic. The chain crosses the membrane as a helical span at residues 163–183 (LLLLCWSVPGAFAFGVVFSEA). Residues 184–207 (YADGIEGYDILVACSSSCPVMFNK) are Extracellular-facing. Residues 208–228 (LWGTTLFMAGFFTPGSMMVGI) form a helical membrane-spanning segment. Residues 229-263 (YGKIFAVSRKHAHAINNLRENQNNQVKKDKKAAKT) are Cytoplasmic-facing. The chain crosses the membrane as a helical span at residues 264-284 (LGIVIGVFLLCWFPCFFTILL). The Extracellular portion of the chain corresponds to 285 to 299 (DPFLNFSTPVVLFDA). Residue Asn289 is glycosylated (N-linked (GlcNAc...) asparagine). Residues 300-322 (LTWFGYFNSTCNPLIYGFFYPWF) traverse the membrane as a helical segment. Topologically, residues 323–351 (RRALKYILLGKIFSSCFHNTILCMQKESE) are cytoplasmic.

It belongs to the G-protein coupled receptor 1 family. In terms of tissue distribution, not expressed in the pons, thalamus, hypothalamus, hippocampus, caudate, putamen, frontal cortex, basal forebrain, midbrain or liver.

It is found in the cell membrane. In terms of biological role, orphan olfactory receptor specific for trace amines. Trace amine compounds are enriched in animal body fluids and act on trace amine-associated receptors (TAARs) to elicit both intraspecific and interspecific innate behaviors. Ligand-binding causes a conformation change that triggers signaling via the G(s)-class of G-proteins which activate adenylate cyclase. The chain is Trace amine-associated receptor 2 from Homo sapiens (Human).